We begin with the raw amino-acid sequence, 748 residues long: Cysteine--tRNA ligase, cytoplasmic (748 aa).

The tract at residues 1–25 (MAGSSGQQGKGRRVQPQWSPPAGTQ) is disordered. Position 2 is an N-acetylalanine (Ala2). Phosphoserine is present on Ser19. Cys55 serves as a coordination point for Zn(2+). Gly56 serves as a coordination point for L-cysteine. The 'HIGH' region signature appears at 57–67 (PTVYDASHMGH). Thr96 is a binding site for L-cysteine. Residues 101–104 (KIIK) carry the 'KIIK' region motif. A phosphoserine mark is found at Ser305 and Ser307. Residues Cys348, His373, and Glu377 each contribute to the Zn(2+) site. His373 is a binding site for L-cysteine. Positions 406–410 (KMSKS) match the 'KMSKS' region motif. Position 409 (Lys409) interacts with ATP. Basic and acidic residues-rich tracts occupy residues 654–679 (KRQV…EAAK) and 700–717 (KFDE…KELS). Disordered regions lie at residues 654-686 (KRQV…MKIP) and 700-721 (KFDE…KGQA). Residue Ser746 is modified to Phosphoserine.

Homodimer. It depends on Zn(2+) as a cofactor.

Its subcellular location is the cytoplasm. It catalyses the reaction tRNA(Cys) + L-cysteine + ATP = L-cysteinyl-tRNA(Cys) + AMP + diphosphate. Catalyzes the ATP-dependent ligation of cysteine to tRNA(Cys). The protein is Cysteine--tRNA ligase, cytoplasmic (CARS1) of Macaca fascicularis (Crab-eating macaque).